The primary structure comprises 275 residues: Penicillin-insensitive murein endopeptidase (275 aa).

Residues 1-19 (MKNWIVGMVALVTMVPVMA) form the signal peptide. 3 disulfide bridges follow: Cys-44-Cys-264, Cys-187-Cys-235, and Cys-216-Cys-223. His-110, His-113, Asp-120, Asp-147, and His-211 together coordinate Zn(2+). The segment at 227-262 (DTPPPGDGCGAELESWFQPPPPSAKPGKTLPPPLPP) is disordered. Positions 244–262 (QPPPPSAKPGKTLPPPLPP) are enriched in pro residues.

This sequence belongs to the peptidase M74 family. Dimer. Zn(2+) serves as cofactor.

The protein resides in the periplasm. Functionally, murein endopeptidase that cleaves the D-alanyl-meso-2,6-diamino-pimelyl amide bond that connects peptidoglycan strands. Likely plays a role in the removal of murein from the sacculus. The polypeptide is Penicillin-insensitive murein endopeptidase (Yersinia pestis bv. Antiqua (strain Antiqua)).